A 395-amino-acid chain; its full sequence is Chaperone protein DnaJ (395 aa).

A J domain is found at 4 to 69 (DYYEVLGLSR…DKRRRYDQFG (66 aa)). The CR-type zinc-finger motif lies at 151 to 232 (GVEKTLKIKK…CYGEGIKQGE (82 aa)). Residues Cys-164, Cys-167, Cys-180, Cys-183, Cys-206, Cys-209, Cys-220, and Cys-223 each contribute to the Zn(2+) site. CXXCXGXG motif repeat units lie at residues 164–171 (CTECNGTG), 180–187 (CPTCHGSG), 206–213 (CPTCGGEG), and 220–227 (CVSCYGEG).

It belongs to the DnaJ family. In terms of assembly, homodimer. The cofactor is Zn(2+).

The protein localises to the cytoplasm. Its function is as follows. Participates actively in the response to hyperosmotic and heat shock by preventing the aggregation of stress-denatured proteins and by disaggregating proteins, also in an autonomous, DnaK-independent fashion. Unfolded proteins bind initially to DnaJ; upon interaction with the DnaJ-bound protein, DnaK hydrolyzes its bound ATP, resulting in the formation of a stable complex. GrpE releases ADP from DnaK; ATP binding to DnaK triggers the release of the substrate protein, thus completing the reaction cycle. Several rounds of ATP-dependent interactions between DnaJ, DnaK and GrpE are required for fully efficient folding. Also involved, together with DnaK and GrpE, in the DNA replication of plasmids through activation of initiation proteins. The sequence is that of Chaperone protein DnaJ from Chlorobium phaeobacteroides (strain DSM 266 / SMG 266 / 2430).